The primary structure comprises 55 residues: MNKFIKVALVGAVLATLTACTGHIENRDKNCSYDYLLHPAISISKIIGGCGPTAQ.

Residues 7–24 traverse the membrane as a helical segment; sequence VALVGAVLATLTACTGHI.

Its subcellular location is the membrane. This is an uncharacterized protein from Escherichia coli O157:H7.